The sequence spans 86 residues: RNA-binding protein Hfq (86 aa).

Positions 9 to 68 constitute a Sm domain; the sequence is DPYLNTLRKEKVGVSIYLVNGIKLQGTIESFDQFVILLKNTVSQMVYKHAISTVVPVRPI.

It belongs to the Hfq family. As to quaternary structure, homohexamer.

RNA chaperone that binds small regulatory RNA (sRNAs) and mRNAs to facilitate mRNA translational regulation in response to envelope stress, environmental stress and changes in metabolite concentrations. Also binds with high specificity to tRNAs. The chain is RNA-binding protein Hfq from Pseudomonas fluorescens (strain Pf0-1).